The following is a 420-amino-acid chain: Mitogen-activated protein kinase HOG2 (420 aa).

Residues 29–37 (VGMGAFGLV) and K52 contribute to the ATP site. D144 functions as the Proton acceptor in the catalytic mechanism. T174 is modified (phosphothreonine). The TXY motif lies at 174–176 (TGY). Y176 bears the Phosphotyrosine mark. The tract at residues 372–394 (AQHHHQTQQQSSGKHTNPTTSSS) is disordered.

The protein belongs to the protein kinase superfamily. Ser/Thr protein kinase family. MAP kinase subfamily. HOG1 sub-subfamily. Requires Mg(2+) as cofactor. Post-translationally, dually phosphorylated on Thr-174 and Tyr-176, which activates the enzyme.

It is found in the cytoplasm. The protein resides in the nucleus. The catalysed reaction is L-seryl-[protein] + ATP = O-phospho-L-seryl-[protein] + ADP + H(+). The enzyme catalyses L-threonyl-[protein] + ATP = O-phospho-L-threonyl-[protein] + ADP + H(+). Activated by tyrosine and threonine phosphorylation. Mitogen-activated protein kinase involved in a signal transduction pathway that is activated by changes in the osmolarity of the extracellular environment. Controls osmotic regulation of transcription of target genes. The sequence is that of Mitogen-activated protein kinase HOG2 (HOG2) from Zygosaccharomyces rouxii.